Reading from the N-terminus, the 236-residue chain is Hydantoin racemase (236 aa).

In terms of assembly, homohexamer, homoheptamer or homooctamer.

The catalysed reaction is a D-5-monosubstituted hydantoin = a L-5-monosubstituted hydantoin. It catalyses the reaction D-5-benzylhydantoin = L-5-benzylhydantoin. Its activity is regulated as follows. Completely inhibited by HgCl(2) and iodoacetamide. Stimulated by dithiothreitol. Functionally, involved in the asymmetric conversion of racemic 5-substituted hydantoins to the corresponding L-amino acids. Catalyzes the racemization via enolization of D- and L-5-monosubstituted hydantoins. It shows preference for hydantoins with arylalkyl side chains such as 5-benzylhydantoin (BH) and, to a lesser extent, 5-(3-indolylmethylene)hydantoin (IMH). The protein is Hydantoin racemase of Paenarthrobacter aurescens (Arthrobacter aurescens).